Consider the following 1622-residue polypeptide: ABC transporter C family member 1 (1622 aa).

9 helical membrane-spanning segments follow: residues F37–I57, F73–V93, E110–V130, F145–K165, Y174–F194, A336–C356, V440–I460, F527–L547, and F557–I577. In terms of domain architecture, ABC transmembrane type-1 1 spans F302–N582. The ABC transporter 1 domain occupies I614–N838. Residue G649–T656 coordinates ATP. A disordered region spans residues A852 to E876. A compositionally biased stretch (polar residues) spans D855–Q871. The next 6 membrane-spanning stretches (helical) occupy residues A909–F929, P951–I971, A1027–I1049, L1053–Y1072, L1138–V1158, and S1172–L1192. One can recognise an ABC transmembrane type-1 2 domain in the interval V916–N1200. Positions W1231 to Y1246 are interaction with calmodulin and FKP42/TWD1. One can recognise an ABC transporter 2 domain in the interval I1237 to Q1471. G1271–S1278 serves as a coordination point for ATP.

The protein belongs to the ABC transporter superfamily. ABCC family. Conjugate transporter (TC 3.A.1.208) subfamily. As to quaternary structure, interacts with calmodulin (CaM), PAS1 and FKBP42/TWD1. In terms of tissue distribution, ubiquitous, with higher levels in leaves and stems and lower levels in roots. Localized in the root apex, root hair tips and root epidermis.

It is found in the vacuole membrane. It catalyses the reaction ATP + H2O + xenobioticSide 1 = ADP + phosphate + xenobioticSide 2.. Functionally, pump for glutathione S-conjugates. Mediates the transport of S-(2,4-dinitrophenyl)-glutathione (DNP-GS), GSSG, cyanidin 3-glucoside-GS (C3G-GS) and metolachlor-GS (MOC-GS). This Arabidopsis thaliana (Mouse-ear cress) protein is ABC transporter C family member 1 (ABCC1).